The primary structure comprises 117 residues: Iron-sulfur cluster insertion protein ErpA (117 aa).

Positions 45, 109, and 111 each coordinate iron-sulfur cluster.

The protein belongs to the HesB/IscA family. In terms of assembly, homodimer. Requires iron-sulfur cluster as cofactor.

Functionally, required for insertion of 4Fe-4S clusters for at least IspG. This Hahella chejuensis (strain KCTC 2396) protein is Iron-sulfur cluster insertion protein ErpA.